A 442-amino-acid chain; its full sequence is MFS transporter asaE (442 aa).

The span at 1-10 (MDRSRTSSQG) shows a compositional bias: polar residues. The interval 1-43 (MDRSRTSSQGRDVLPPRGDEGRISPSLDKEKSPGPEDQPDAPP) is disordered. Over residues 17 to 34 (RGDEGRISPSLDKEKSPG) the composition is skewed to basic and acidic residues. The next 12 membrane-spanning stretches (helical) occupy residues 47 to 67 (LTAWLVVVGAWCTSFCSFGWV), 89 to 109 (TISWIPSLQIFFMFAMGPIVG), 119 to 139 (YLIIGGTFFHVFGLMMASIST), 150 to 170 (ICSAIGAAAIFQPALSAVSAW), 177 to 197 (IAFATLSTGSSVGGVIFPIMV), 206 to 226 (FGWSMRISAFMILFLLGIAIV), 252 to 272 (PVFIVTLLGYMLLTYGVFIPI), 288 to 307 (LASYLVPMLNGASLFGRLGA), 319 to 339 (IFIVMCIVAGVLVLALWIPAT), 342 to 362 (APIIVFATLFGFASGAYVSLS), 381 to 401 (LLFLFASVGGLTTSPIAGAIL), and 413 to 433 (IFSGVMLLGGTAFIITARIVG).

This sequence belongs to the major facilitator superfamily. Monocarboxylate porter (TC 2.A.1.13) family.

The protein localises to the cell membrane. It participates in secondary metabolite biosynthesis. Its function is as follows. MFS transporter; part of the gene cluster that mediates the biosynthesis of aspergillic acid. Probably involved in aspergillic acid metabolism and transport. This Aspergillus flavus (strain ATCC 200026 / FGSC A1120 / IAM 13836 / NRRL 3357 / JCM 12722 / SRRC 167) protein is MFS transporter asaE.